The chain runs to 571 residues: Vesicle-associated protein 1-4 (571 aa).

The 126-residue stretch at 1–126 folds into the MSP 1 domain; that stretch reads MSTDELLTFD…EETIFKIIYV (126 aa). Residues 132–154 form a disordered region; sequence QSPVQEGLEDGSSPSASVSDKGN. Positions 143–153 are enriched in polar residues; the sequence is SSPSASVSDKG. Positions 176–296 constitute an MSP 2 domain; the sequence is LLIIDPVDVQ…EETRLKVMYV (121 aa). Residues 297–322 are disordered; it reads TPPQPPSPVQEGTEEGSSPRASVSDN. Residues 311-322 show a composition bias toward polar residues; that stretch reads EGSSPRASVSDN. Residues 356–493 form the TIR domain; sequence PQYQVFINFR…KWKEALSSVF (138 aa). Residue Glu430 is part of the active site.

The protein belongs to the VAMP-associated protein (VAP) (TC 9.B.17) family.

The catalysed reaction is NAD(+) + H2O = ADP-D-ribose + nicotinamide + H(+). May play a role in vesicle trafficking. The polypeptide is Vesicle-associated protein 1-4 (PVA14) (Arabidopsis thaliana (Mouse-ear cress)).